Consider the following 118-residue polypeptide: Myotrophin (118 aa).

3 ANK repeats span residues 1 to 30 (MGDKEFVWAIKNGDLDAVKEFVLGGEDVNR), 34 to 65 (GGRKPMHYAADCGQDEVLEFLLSKGANINAAD), and 67 to 98 (HGITPLLSACYEGHRKCVELLLSKGADKTVKG).

The protein belongs to the myotrophin family.

The protein resides in the cytoplasm. It localises to the nucleus. It is found in the perinuclear region. Functionally, regulates NF-kappa-B transcription factor activity. Promotes growth of cardiomyocytes, but not cardiomyocyte proliferation. Promotes cardiac muscle hypertrophy. Plays a role in the regulation of the growth of actin filaments. Inhibits the activity of the F-actin-capping protein complex. The sequence is that of Myotrophin (mtpn) from Xenopus tropicalis (Western clawed frog).